Consider the following 337-residue polypeptide: 2-oxoglutarate-dependent ethylene/succinate-forming enzyme (337 aa).

Positions 166–286 constitute a Fe2OG dioxygenase domain; it reads GWHHMRVLRF…RFACAYFHEP (121 aa). The Fe cation site is built by histidine 189 and histidine 268.

It belongs to the iron/ascorbate-dependent oxidoreductase family. Monomer. Fe(2+) serves as cofactor.

The catalysed reaction is 2-oxoglutarate + O2 + 2 H(+) = ethene + 3 CO2 + H2O. It catalyses the reaction L-arginine + 2-oxoglutarate + O2 = guanidine + L-glutamate 5-semialdehyde + succinate + CO2. It functions in the pathway alkene biosynthesis; ethylene biosynthesis via 2-oxoglutarate. Simultaneously catalyzes two reactions, namely formation of ethylene and of succinate from 2-oxoglutarate. The sequence is that of 2-oxoglutarate-dependent ethylene/succinate-forming enzyme (efe) from Pseudomonas syringae pv. pisi.